We begin with the raw amino-acid sequence, 1976 residues long: Protein TIC 214 (1976 aa).

6 helical membrane passes run 11–31 (LLLL…YYGF), 64–84 (FIMG…HLAL), 87–107 (PHTL…FFWN), 126–146 (LSIQ…HFVL), 173–193 (FFGW…VLSW), and 221–241 (IFSI…PSPI). Residues 619–635 (FEEEEEEEEEDDQEEST) show a composition bias toward acidic residues. Disordered regions lie at residues 619–642 (FEEE…GIRS) and 830–861 (SSYV…EDKR). The segment covering 836-861 (GAKEKEKIEEEHEEEKGEYKRKEDKR) has biased composition (basic and acidic residues). 2 helical membrane passes run 1054 to 1074 (IIKI…FFVL) and 1202 to 1222 (IYMS…QFFL). Residues 1633–1665 (QKERFHPKPKVESNQKGYLELENRNRDEKERQH) are compositionally biased toward basic and acidic residues. The segment at 1633-1669 (QKERFHPKPKVESNQKGYLELENRNRDEKERQHQGNL) is disordered.

This sequence belongs to the TIC214 family. Part of the Tic complex.

Its subcellular location is the plastid. The protein resides in the chloroplast inner membrane. In terms of biological role, involved in protein precursor import into chloroplasts. May be part of an intermediate translocation complex acting as a protein-conducting channel at the inner envelope. The sequence is that of Protein TIC 214 from Nymphaea alba (White water-lily).